Consider the following 342-residue polypeptide: Vancomycin B-type resistance protein VanB (342 aa).

Residues K132, 168 to 170, 176 to 177, 206 to 213, and F240 contribute to the ATP site; these read FVK, SS, and EQAISGCE. Positions 136–337 constitute an ATP-grasp domain; it reads YILTKNAGIA…LPALIDSLIT (202 aa). H243 contributes to the substrate binding site. 303–304 is an ATP binding site; it reads NE. Positions 304 and 306 each coordinate Mg(2+).

It belongs to the D-alanine--D-alanine ligase family. It depends on Mg(2+) as a cofactor. Requires Mn(2+) as cofactor.

It localises to the cell membrane. It carries out the reaction (R)-lactate + D-alanine + ATP = D-alanyl-(R)-lactate + ADP + phosphate. Its function is as follows. Required for high-level resistance to glycopeptides antibiotics. D-Ala--D-Ala ligase of altered specificity which catalyzes ester bond formation between D-Ala and various D-hydroxy acids; producing a peptidoglycan which does not terminate in D-alanine but in D-lactate, thus preventing vancomycin binding. This is Vancomycin B-type resistance protein VanB (vanB) from Enterococcus faecalis (strain ATCC 700802 / V583).